A 76-amino-acid polypeptide reads, in one-letter code: Small ribosomal subunit protein bS18 (76 aa).

It belongs to the bacterial ribosomal protein bS18 family. In terms of assembly, part of the 30S ribosomal subunit. Forms a tight heterodimer with protein bS6.

Binds as a heterodimer with protein bS6 to the central domain of the 16S rRNA, where it helps stabilize the platform of the 30S subunit. The polypeptide is Small ribosomal subunit protein bS18 (Pseudomonas entomophila (strain L48)).